Here is a 381-residue protein sequence, read N- to C-terminus: Homoserine O-succinyltransferase (381 aa).

The AB hydrolase-1 domain occupies 45–360 (NAVLVCHALN…PHGHDAFLLD (316 aa)). Catalysis depends on Ser151, which acts as the Nucleophile. A substrate-binding site is contributed by Arg221. Active-site residues include Asp321 and His354. Residue Asp355 coordinates substrate.

It belongs to the AB hydrolase superfamily. MetX family. In terms of assembly, homodimer.

It localises to the cytoplasm. It catalyses the reaction L-homoserine + succinyl-CoA = O-succinyl-L-homoserine + CoA. The protein operates within amino-acid biosynthesis; L-methionine biosynthesis via de novo pathway; O-succinyl-L-homoserine from L-homoserine: step 1/1. In terms of biological role, transfers a succinyl group from succinyl-CoA to L-homoserine, forming succinyl-L-homoserine. The sequence is that of Homoserine O-succinyltransferase from Burkholderia ambifaria (strain ATCC BAA-244 / DSM 16087 / CCUG 44356 / LMG 19182 / AMMD) (Burkholderia cepacia (strain AMMD)).